The primary structure comprises 525 residues: Chromosomal replication initiator protein DnaA (525 aa).

Residues 1–71 (MNDFWQHCSA…SDLAREFWNT (71 aa)) are domain I, interacts with DnaA modulators. Residues 71–188 (TPIEVQFVLD…GEADSMYERS (118 aa)) are domain II. A disordered region spans residues 160–182 (AAAGRRTWRPGPGAAPANGGEAD). A compositionally biased stretch (low complexity) spans 169–181 (PGPGAAPANGGEA). Positions 189 to 405 (KLNPVLTFDN…GALRKILAYS (217 aa)) are domain III, AAA+ region. ATP-binding residues include Gly233, Gly235, Lys236, and Thr237. A domain IV, binds dsDNA region spans residues 406-525 (KFHGREISIE…LHVLEQTLKG (120 aa)).

Belongs to the DnaA family. In terms of assembly, oligomerizes as a right-handed, spiral filament on DNA at oriC.

The protein localises to the cytoplasm. In terms of biological role, plays an essential role in the initiation and regulation of chromosomal replication. ATP-DnaA binds to the origin of replication (oriC) to initiate formation of the DNA replication initiation complex once per cell cycle. Binds the DnaA box (a 9 base pair repeat at the origin) and separates the double-stranded (ds)DNA. Forms a right-handed helical filament on oriC DNA; dsDNA binds to the exterior of the filament while single-stranded (ss)DNA is stabiized in the filament's interior. The ATP-DnaA-oriC complex binds and stabilizes one strand of the AT-rich DNA unwinding element (DUE), permitting loading of DNA polymerase. After initiation quickly degrades to an ADP-DnaA complex that is not apt for DNA replication. Binds acidic phospholipids. This chain is Chromosomal replication initiator protein DnaA, found in Burkholderia orbicola (strain MC0-3).